The primary structure comprises 464 residues: DNA primase DnaG (464 aa).

Positions 200–274 constitute a Toprim domain; it reads DSIIVVEGRA…DVDYVARAPE (75 aa). The Mg(2+) site is built by Glu-206, Asp-248, and Asp-250. Positions 322-332 are enriched in basic and acidic residues; sequence NGREEKVREVK. A disordered region spans residues 322-359; the sequence is NGREEKVREVKPPAPAPAPAPAPKPIEKPEPKEREEKI. Over residues 333–345 the composition is skewed to pro residues; sequence PPAPAPAPAPAPK. The segment covering 346 to 359 has biased composition (basic and acidic residues); that stretch reads PIEKPEPKEREEKI.

It belongs to the archaeal DnaG primase family. Forms a ternary complex with MCM helicase and DNA. Component of the archaeal exosome complex. Mg(2+) serves as cofactor.

It catalyses the reaction ssDNA + n NTP = ssDNA/pppN(pN)n-1 hybrid + (n-1) diphosphate.. Its function is as follows. RNA polymerase that catalyzes the synthesis of short RNA molecules used as primers for DNA polymerase during DNA replication. Also part of the exosome, which is a complex involved in RNA degradation. Acts as a poly(A)-binding protein that enhances the interaction between heteromeric, adenine-rich transcripts and the exosome. This Thermococcus onnurineus (strain NA1) protein is DNA primase DnaG.